The following is a 696-amino-acid chain: ATP-dependent zinc metalloprotease FtsH (696 aa).

The Cytoplasmic portion of the chain corresponds to 1 to 29 (MWLQVTNCSTLHSSLSYCGANTLSDMAKN). The chain crosses the membrane as a helical span at residues 30–50 (LILWLVIAVVLMSVFQSFGPS). Residues 51–124 (DSAGRQVDYT…LGTPPEEPSL (74 aa)) lie on the Periplasmic side of the membrane. A helical transmembrane segment spans residues 125–145 (LASIFISWFPMLLLIGVWVFF). Residues 146 to 696 (MRQMQGGGGG…APKEDDKPQA (551 aa)) lie on the Cytoplasmic side of the membrane. 219–226 (GPPGTGKT) contacts ATP. His441 serves as a coordination point for Zn(2+). Glu442 is a catalytic residue. Residues His445 and Asp519 each contribute to the Zn(2+) site. The interval 627–696 (RAPKGWGDTD…APKEDDKPQA (70 aa)) is disordered. Residues 650–696 (PEAKTESAPEAKAEANVETEEKPVAADSEELKPKAEQAPKEDDKPQA) show a composition bias toward basic and acidic residues.

It in the central section; belongs to the AAA ATPase family. This sequence in the C-terminal section; belongs to the peptidase M41 family. Homohexamer. The cofactor is Zn(2+).

The protein resides in the cell inner membrane. Functionally, acts as a processive, ATP-dependent zinc metallopeptidase for both cytoplasmic and membrane proteins. Plays a role in the quality control of integral membrane proteins. This is ATP-dependent zinc metalloprotease FtsH from Photobacterium profundum (strain SS9).